The following is a 349-amino-acid chain: Pinopsin (349 aa).

The span at 1-16 (MDPTNSPQEPPHTSTP) shows a compositional bias: polar residues. The disordered stretch occupies residues 1 to 22 (MDPTNSPQEPPHTSTPGPFDGP). Topologically, residues 1–32 (MDPTNSPQEPPHTSTPGPFDGPQWPHQAPRGM) are extracellular. Residues 33–57 (YLSVAVLMGIVVISASVVNGLVIVV) form a helical membrane-spanning segment. Topologically, residues 58-69 (SIRYKKLRSPLN) are cytoplasmic. A helical membrane pass occupies residues 70–94 (YILVNLAMADLLVTLCGSSVSFSNN). The Extracellular portion of the chain corresponds to 95–109 (INGFFVFGKRLCELE). An intrachain disulfide couples C106 to C183. Residues 110-129 (GFMVSLTGIVGLWSLAILAL) form a helical membrane-spanning segment. Residues 130–148 (ERYVVVCRPLGDFRFQHRH) are Cytoplasmic-facing. A helical transmembrane segment spans residues 149–172 (AVTGCAFTWVWSLLWTTPPLLGWS). Over 173–196 (SYVPEGLRTSCGPNWYTGGSNNNS) the chain is Extracellular. N194 is a glycosylation site (N-linked (GlcNAc...) asparagine). A helical membrane pass occupies residues 197-224 (YILTLFVTCFVMPLSLILFSYANLLMTL). Residues 225-246 (RAAAAQQQESDTTQQAERQVTR) are Cytoplasmic-facing. Residues 247–270 (MVVAMVMAFLICWLPYTTFALVVA) form a helical membrane-spanning segment. Residues 271–278 (TNKDIAIQ) are Extracellular-facing. Residues 279–303 (PALASLPSYFSKTATVYNPIIYVFM) traverse the membrane as a helical segment. K290 is modified (N6-(retinylidene)lysine). The Cytoplasmic segment spans residues 304–349 (NKQFQSCLLKMLCCGHHPRGTGRTAPAAPASPTDGLRNKVTPSHPV). 2 S-palmitoyl cysteine lipidation sites follow: C316 and C317. The disordered stretch occupies residues 325 to 349 (GRTAPAAPASPTDGLRNKVTPSHPV).

Belongs to the G-protein coupled receptor 1 family. Opsin subfamily. In terms of processing, phosphorylated on some or all of the serine and threonine residues present in the C-terminal region. As to expression, pineal gland.

Its subcellular location is the membrane. Functionally, produces a slow and prolonged phototransduction response consistent with the non-visual function of pineal photoreception. This chain is Pinopsin, found in Columba livia (Rock dove).